Reading from the N-terminus, the 154-residue chain is General odorant-binding protein 83a (154 aa).

The first 33 residues, Met-1–Ala-33, serve as a signal peptide directing secretion. 3 disulfides stabilise this stretch: Cys-55–Cys-86, Cys-82–Cys-133, and Cys-124–Cys-142.

The protein belongs to the PBP/GOBP family. As to expression, in the ventrolateral region of the antenna, expressed in two distinct types of olfactory hairs: in most sensilla trichodea and in a subset of the small sensilla basiconica (at protein level).

It localises to the secreted. This chain is General odorant-binding protein 83a (Obp83a), found in Drosophila melanogaster (Fruit fly).